The sequence spans 317 residues: Non-structural protein 2 (317 aa).

Residues 107 to 109 (SVR), lysine 188, and 221 to 223 (HGK) each bind ATP. An RNA-binding region spans residues 205 to 241 (LVAELRWQYNRFAVITHGKGHYRVVKYSSVANHADRV). The active-site For NTPase and RTPase activities is histidine 225. Arginine 227 contributes to the ATP binding site.

Belongs to the rotavirus NSP2 family. In terms of assembly, homooctamer. Interacts with VP1; this interaction is weak. Interacts with NSP5; this interaction leads to up-regulation of NSP5 phosphorylation and formation of viral factories. Interacts with host DCP1A, DCP1B, DDX6, EDC4 and EIF2S1/eIF2-alpha; these interactions are probably part of the sequestration of some host SGs and PBs proteins in viral factories. Mg(2+) is required as a cofactor.

Its subcellular location is the host cytoplasm. Its function is as follows. Participates in replication and packaging of the viral genome. Plays a crucial role, together with NSP5, in the formation of virus factories (viroplasms), which are large inclusions in the host cytoplasm where replication intermediates are assembled and viral RNA replication takes place. Displays ssRNA binding, NTPase, RNA triphosphatase (RTPase) and ATP-independent helix-unwinding activities. The unwinding activity may prepare and organize plus-strand RNAs for packaging and replication by removing interfering secondary structures. The RTPase activity plays a role in the removal of the gamma-phosphate from the rotavirus RNA minus strands of dsRNA genome segments. Participates in the selective exclusion of host proteins from stress granules (SG) and P bodies (PB). Also participates in the sequestration of these remodeled organelles in viral factories. In Homo sapiens (Human), this protein is Non-structural protein 2.